We begin with the raw amino-acid sequence, 289 residues long: D-xylonolactone lactonase (289 aa).

Glu17 is a binding site for Fe(2+). 4 residues coordinate D-xylono-1,5-lactone: Arg98, Asn100, Glu119, and Asn145. Asn145 and Asp195 together coordinate Fe(2+). Asp195 acts as the Proton donor/acceptor in catalysis.

The protein belongs to the SMP-30/CGR1 family. Fe(2+) serves as cofactor.

The enzyme catalyses D-xylono-1,5-lactone + H2O = D-xylonate + H(+). Involved in the degradation of D-xylose. Catalyzes the hydrolysis of D-xylonolactone to D-xylonate. The polypeptide is D-xylonolactone lactonase (Caulobacter vibrioides (strain ATCC 19089 / CIP 103742 / CB 15) (Caulobacter crescentus)).